The following is an 894-amino-acid chain: Eukaryotic translation initiation factor 3 subunit C (894 aa).

Disordered stretches follow at residues methionine 1–lysine 28 and serine 162–methionine 235. Composition is skewed to acidic residues over residues serine 12 to glutamate 22, aspartate 169 to proline 189, and serine 203 to serine 214. Residues phenylalanine 215 to asparagine 224 are compositionally biased toward polar residues. The 177-residue stretch at tyrosine 625 to proline 801 folds into the PCI domain. The tract at residues glutamine 824–phenylalanine 894 is disordered. Residues arginine 845–lysine 854 show a composition bias toward basic and acidic residues. Over residues glycine 855–proline 870 the composition is skewed to gly residues. A compositionally biased stretch (basic residues) spans glutamine 884 to phenylalanine 894.

Belongs to the eIF-3 subunit C family. As to quaternary structure, component of the eukaryotic translation initiation factor 3 (eIF-3) complex.

It localises to the cytoplasm. Component of the eukaryotic translation initiation factor 3 (eIF-3) complex, which is involved in protein synthesis of a specialized repertoire of mRNAs and, together with other initiation factors, stimulates binding of mRNA and methionyl-tRNAi to the 40S ribosome. The eIF-3 complex specifically targets and initiates translation of a subset of mRNAs involved in cell proliferation. The sequence is that of Eukaryotic translation initiation factor 3 subunit C from Caenorhabditis briggsae.